Reading from the N-terminus, the 169-residue chain is MERAIFAGGCFWCMVQPFEEQAGILSVRSGYTGGHLPNPSYEQVCAKTTGHTEAVEIIFDPEEISYKELVELYWVQTDPTDAFGQFEDRGDNYRPVIYYTTERQKEIAEQSKANLQASGRFDQPIVTTIEPAEPFYLAEDYHQGFYKKNPKRYAQSSAIRHQFLEENWS.

The active site involves Cys10.

This sequence belongs to the MsrA Met sulfoxide reductase family.

It catalyses the reaction L-methionyl-[protein] + [thioredoxin]-disulfide + H2O = L-methionyl-(S)-S-oxide-[protein] + [thioredoxin]-dithiol. It carries out the reaction [thioredoxin]-disulfide + L-methionine + H2O = L-methionine (S)-S-oxide + [thioredoxin]-dithiol. Has an important function as a repair enzyme for proteins that have been inactivated by oxidation. Catalyzes the reversible oxidation-reduction of methionine sulfoxide in proteins to methionine. This chain is Peptide methionine sulfoxide reductase MsrA, found in Streptococcus pyogenes serotype M3 (strain ATCC BAA-595 / MGAS315).